Consider the following 277-residue polypeptide: Polar tube protein 2 (277 aa).

The first 18 residues, 1–18, serve as a signal peptide directing secretion; it reads MLLLLAITAVVSATMVHP. The N-linked (GlcNAc...) asparagine glycan is linked to N134. Residues 237–251 are compositionally biased toward basic and acidic residues; it reads QKKEVKDTKEGEKSA. Residues 237-277 form a disordered region; the sequence is QKKEVKDTKEGEKSASQDSDGEGTAEDAEVQQPSADGEGLE. Positions 255 to 265 are enriched in acidic residues; it reads SDGEGTAEDAE.

In terms of assembly, interacts with PTP1 and PTP3.

It is found in the spore polar tube. In terms of biological role, involved in formation of a polar tube through which the infectious agent is passed on to the host cell. The polypeptide is Polar tube protein 2 (PTP2) (Encephalitozoon cuniculi (strain GB-M1) (Microsporidian parasite)).